A 278-amino-acid polypeptide reads, in one-letter code: Bis(5'-nucleosyl)-tetraphosphatase, symmetrical (278 aa).

This sequence belongs to the Ap4A hydrolase family.

It catalyses the reaction P(1),P(4)-bis(5'-adenosyl) tetraphosphate + H2O = 2 ADP + 2 H(+). Hydrolyzes diadenosine 5',5'''-P1,P4-tetraphosphate to yield ADP. The chain is Bis(5'-nucleosyl)-tetraphosphatase, symmetrical from Buchnera aphidicola subsp. Baizongia pistaciae (strain Bp).